The sequence spans 634 residues: MTVDTDKQTLGFQTEVKQLLQLMIHSLYSNKEIFLRELVSNAADAADKLRFEALVKPELLEGSGELRIRVDYDKDARTVTIDDNGIGMSREDAVSHLGTIAKSGTADFLKHLSGDQKKDANLIGQFGVGFYSAFIVADQVDVYSRRAGLPAREGVHWSSRGEGEFEVASVDKPERGTRIVLHLKDGEDTFADGWTLRGILKKYSDHIGLPIEMRKEHYGEAADKPAEPEWEAVNRASALWTRPKSEIKDEEYQEFYKHIAHDAGNPLAWSHNKVEGKLEYTSLLFVPGRAPFDLYHRDSAKGLKLYVQRVFIMDQAEQFLPLYLRFIKGVVDSSDLSLNVSREILQSGPVVDSMKSALTKRSLDMLEKLAKDKPDDYATFWRNFGQALKEGPAEDYANREKIAGLMRFSSTHDTTGAQSVGLADYVSRLAEGQDKLYYLTGESYAQIKDSPHLEVFRKKGIEVLLLTDRIDEWLMSYLTEFDGKSFVDVARGDLDLGKLDSEEDKKAQEEVAKSKEGLASRIKAALGEDVAEVRVSHRLTDSPAILAIGQGDLGLQMRQLLEASGQAVPESKPVFEFNPTHPLIEKLDAEQDMDRFCDLSQVLFDQAALAAGDSLKDPAGYVKRLNKLLLELSV.

Residues 1 to 342 (MTVDTDKQTL…SSDLSLNVSR (342 aa)) form an a; substrate-binding region. A b region spans residues 343–559 (EILQSGPVVD…QGDLGLQMRQ (217 aa)). Residues 560–634 (LLEASGQAVP…LNKLLLELSV (75 aa)) are c.

The protein belongs to the heat shock protein 90 family. As to quaternary structure, homodimer.

It is found in the cytoplasm. In terms of biological role, molecular chaperone. Has ATPase activity. This is Chaperone protein HtpG from Xanthomonas oryzae pv. oryzae (strain MAFF 311018).